A 447-amino-acid chain; its full sequence is Selenide, water dikinase 3 (447 aa).

The active site involves Sec50. Residue Sec50 is a non-standard amino acid, selenocysteine. ATP is bound by residues Lys53, Gly103–Asp105, Asp123, Asp146, and Gly197–Thr200. A Mg(2+)-binding site is contributed by Asp105. A Mg(2+)-binding site is contributed by Asp146. Asp301 is a Mg(2+) binding site.

Belongs to the selenophosphate synthase 1 family. As to quaternary structure, homodimer. The cofactor is Mg(2+). In terms of tissue distribution, in the embryo, expressed in retina, olfactory vesicles, tectum, pronephros ducts and myotomes at 24 hours post-fertilization and in retina, tectum, liver and intestinal bulb 3 days after fertilization.

It carries out the reaction hydrogenselenide + ATP + H2O = selenophosphate + AMP + phosphate + 2 H(+). Its function is as follows. Synthesizes selenophosphate from selenide and ATP. In Danio rerio (Zebrafish), this protein is Selenide, water dikinase 3.